Here is a 1055-residue protein sequence, read N- to C-terminus: Type I restriction enzyme HindI endonuclease subunit (1055 aa).

In terms of domain architecture, Helicase ATP-binding spans 287–468 (TSEKGDRRIG…QDVFGRYVSI (182 aa)).

This sequence belongs to the HsdR family. As to quaternary structure, the type I restriction/modification system is composed of three polypeptides R, M and S; the restriction enzyme has stoichiometry R(2)M(2)S(1) while the methyltransferase is M(2)S(1).

The catalysed reaction is Endonucleolytic cleavage of DNA to give random double-stranded fragments with terminal 5'-phosphates, ATP is simultaneously hydrolyzed.. Its function is as follows. The restriction (R) subunit of a type I restriction enzyme that recognizes 5'-RAACN(5)TAG-3' and cleaves a random distance away. Subunit R is required for both nuclease and ATPase activities, but not for modification. After locating a non-methylated recognition site, the enzyme complex serves as a molecular motor that translocates DNA in an ATP-dependent manner until a collision occurs that triggers cleavage. This is Type I restriction enzyme HindI endonuclease subunit from Haemophilus influenzae (strain ATCC 51907 / DSM 11121 / KW20 / Rd).